The primary structure comprises 542 residues: MFS-type efflux pump MMF1 (542 aa).

8 consecutive transmembrane segments (helical) span residues 24–44 (WTIF…MTMI), 51–71 (IVAA…AFLL), 98–118 (VIFL…VLVV), 124–144 (GLGG…LTTL), 151–171 (FGLI…LGGV), 179–199 (WIFW…VLFL), 215–235 (LDLV…IAVT), and 248–268 (VWVP…VEWI). Residue Asn285 is glycosylated (N-linked (GlcNAc...) asparagine). A run of 6 helical transmembrane segments spans residues 296-316 (FLHG…FQAI), 326-346 (IWSF…GLLI), 355-375 (LIFI…HWSV), 384-404 (ISQI…LPPI), 419-439 (AYAF…TTIF), and 490-510 (ISDS…STFL).

The protein belongs to the major facilitator superfamily.

It is found in the cell membrane. Functionally, glycosyltransferase; part of the gene cluster that mediates the biosynthesis of mannosylerythritol lipids (MELs), surface-active substances that enhance the availability of water-insoluble substrates. MMF1 is directly involved in the secretiopn of MALs. This Pseudozyma antarctica (strain T-34) (Yeast) protein is MFS-type efflux pump MMF1.